A 293-amino-acid chain; its full sequence is Ribokinase (293 aa).

Residues 11–13 (SMD), 39–43 (GKGAN), and glutamate 139 contribute to the substrate site. Residues asparagine 183 and 210-215 (TEGKQG) each bind ATP. Residues aspartate 236 and threonine 238 each coordinate K(+). Residues 241–242 (GD) and asparagine 266 each bind ATP. Aspartate 242 lines the substrate pocket. The active-site Proton acceptor is the aspartate 242. 3 residues coordinate K(+): serine 272, serine 275, and glycine 277.

Belongs to the carbohydrate kinase PfkB family. Ribokinase subfamily. In terms of assembly, homodimer. It depends on Mg(2+) as a cofactor.

The protein localises to the cytoplasm. It carries out the reaction D-ribose + ATP = D-ribose 5-phosphate + ADP + H(+). It functions in the pathway carbohydrate metabolism; D-ribose degradation; D-ribose 5-phosphate from beta-D-ribopyranose: step 2/2. Activated by a monovalent cation that binds near, but not in, the active site. The most likely occupant of the site in vivo is potassium. Ion binding induces a conformational change that may alter substrate affinity. Functionally, catalyzes the phosphorylation of ribose at O-5 in a reaction requiring ATP and magnesium. The resulting D-ribose-5-phosphate can then be used either for sythesis of nucleotides, histidine, and tryptophan, or as a component of the pentose phosphate pathway. In Bacillus subtilis (strain 168), this protein is Ribokinase.